Consider the following 974-residue polypeptide: Short transient receptor potential channel 4 (974 aa).

The Cytoplasmic portion of the chain corresponds to 1–324; it reads MAQFYYKRNV…YDEFPGWRRR (324 aa). ANK repeat units follow at residues 29–60, 71–93, 96–118, and 141–165; these read LSPS…IYFK, RTAL…LSFN, VGDA…LLNH, and PDIT…VQKG. Positions 87-172 are multimerization domain; sequence ELLLSFNVYV…QKGVSVPRPH (86 aa). 4 residues coordinate Zn(2+): His-172, Cys-176, Cys-178, and Cys-181. A coiled-coil region spans residues 223-260; that stretch reads LSWELQELSKVENEFKSEYEELSRQCKQFAKDLLDQTR. Residues 254–304 are multimerization domain; sequence DLLDQTRSSRELEIILNYRDDNSLIEEQSGNDLARLKLAIKYRQKEFVAQP. The segment at residues 325–359 is an intramembrane region (discontinuously helical); sequence HWAVKMVTCFIIGLLFPVFSVCYLIAPKSPLGLFI. Residues 360–362 are Cytoplasmic-facing; sequence RKP. Residues 363 to 383 form a helical membrane-spanning segment; sequence FIKFICHTASYLTFLFLLLLA. Topologically, residues 384-403 are extracellular; that stretch reads SQHIDRSDLNRQGPPPTIVE. A helical membrane pass occupies residues 404–418; sequence WMILPWVLGFIWGEI. Ca(2+) contacts are provided by Glu-417, Gln-420, Asn-435, and Asp-438. Over 419 to 432 the chain is Cytoplasmic; that stretch reads KQMWDGGLQDYIHD. Residues 433 to 453 form a helical membrane-spanning segment; sequence WWNLMDFVMNSLYLATISLKI. The Extracellular portion of the chain corresponds to 454–475; that stretch reads VAFVKYSALNPRESWDMWHPTL. Residues 476 to 498 form a helical membrane-spanning segment; the sequence is VAEALFAIANIFSSLRLISLFTA. Over 499–511 the chain is Cytoplasmic; the sequence is NSHLGPLQISLGR. Residues 512 to 534 form a helical membrane-spanning segment; that stretch reads MLLDILKFLFIYCLVLLAFANGL. Over 535–599 the chain is Extracellular; the sequence is NQLYFYYEET…HEFTEFVGAT (65 aa). Cysteines 549 and 554 form a disulfide. Residues 600 to 620 form a helical membrane-spanning segment; it reads MFGTYNVISLVVLLNMLIAMM. The segment at 615 to 974 is interaction with ITPR1, ITPR2 and ITPR3; sequence MLIAMMNNSY…AHEDYVTTRL (360 aa). The Cytoplasmic portion of the chain corresponds to 621 to 974; the sequence is NNSYQLIADH…AHEDYVTTRL (354 aa). A disordered region spans residues 765-787; the sequence is ANAASSADSDEKSQSEGNGKDKR. Residues 773-784 show a composition bias toward basic and acidic residues; sequence SDEKSQSEGNGK. A phosphotyrosine; by FYN mark is found at Tyr-956 and Tyr-969. The tract at residues 972 to 974 is PDZ-binding domain; it reads TRL.

Belongs to the transient receptor (TC 1.A.4) family. STrpC subfamily. TRPC4 sub-subfamily. In terms of assembly, homotetramer. Heterotetramer with TRPC1 and/or TRPC5. Forms a heteromeric ion channel with TRPC1, with a 1:3 TRPC1:TRPC4 stoichiometry. Interacts with TRPC4AP. Isoform alpha but not isoform beta interacts with ITPR1, ITPR2 and ITPR3. Interacts with NHERF1. Interacts with MX1 and RNF24. Interacts (via CIRB domain) with SESTD1 (via the spectrin 1 repeat) and SPTBN5 (via C-terminus). Interacts with CDH5 and CTNNB1. Interacts (via protein 4.1-binding domain) with EPB41L2. Interacts with PLSCR1. In terms of tissue distribution, abundantly expressed in brain (hippocampal CA1 pyramidal neurons, dentate gyrus granule cells, and cerebral cortical neurons, and in the septal nuclei and the mitral layer of olfactory bulb). Lower levels are detected in other tissues.

Its subcellular location is the cell membrane. It catalyses the reaction Ca(2+)(in) = Ca(2+)(out). The enzyme catalyses Na(+)(in) = Na(+)(out). It carries out the reaction Li(+)(in) = Li(+)(out). The catalysed reaction is Cs(+)(in) = Cs(+)(out). With respect to regulation, may be operated by a phosphatidylinositol second messenger system activated by receptor tyrosine kinases or G-protein coupled receptors. May be activated by intracellular calcium store depletion. Its function is as follows. Forms a receptor-activated non-selective calcium permeant cation channel. Acts as a cell-cell contact-dependent endothelial calcium entry channel. Forms a homomeric ion channel or a heteromeric ion channel with TRPC1; the heteromeric ion channel has reduced calcium permeability compared to the homomeric channel. Also permeable to monovalent ions including sodium, lithium and cesium ions. The chain is Short transient receptor potential channel 4 (Trpc4) from Mus musculus (Mouse).